Reading from the N-terminus, the 349-residue chain is Anthranilate phosphoribosyltransferase (349 aa).

5-phospho-alpha-D-ribose 1-diphosphate is bound by residues G82, 85 to 86 (GD), 92 to 95 (NVST), 110 to 118 (KHGNRGVSS), and S122. G82 is an anthranilate binding site. S94 provides a ligand contact to Mg(2+). N113 is an anthranilate binding site. R168 contributes to the anthranilate binding site. 2 residues coordinate Mg(2+): D227 and E228.

This sequence belongs to the anthranilate phosphoribosyltransferase family. Homodimer. Mg(2+) serves as cofactor.

The catalysed reaction is N-(5-phospho-beta-D-ribosyl)anthranilate + diphosphate = 5-phospho-alpha-D-ribose 1-diphosphate + anthranilate. It participates in amino-acid biosynthesis; L-tryptophan biosynthesis; L-tryptophan from chorismate: step 2/5. In terms of biological role, catalyzes the transfer of the phosphoribosyl group of 5-phosphorylribose-1-pyrophosphate (PRPP) to anthranilate to yield N-(5'-phosphoribosyl)-anthranilate (PRA). In Acinetobacter baylyi (strain ATCC 33305 / BD413 / ADP1), this protein is Anthranilate phosphoribosyltransferase.